The following is a 910-amino-acid chain: Protein translocase subunit SecA (910 aa).

ATP is bound by residues Gln87, 105-109 (GEGKT), and Asp508. The tract at residues 848–910 (RLSQSQFQHQ…KYKHCHGQLS (63 aa)) is disordered. The span at 869-880 (AQVQAAQQGVAQ) shows a compositional bias: low complexity. Positions 894, 896, 905, and 906 each coordinate Zn(2+). Residues 900-910 (KKYKHCHGQLS) show a composition bias toward basic residues.

This sequence belongs to the SecA family. Monomer and homodimer. Part of the essential Sec protein translocation apparatus which comprises SecA, SecYEG and auxiliary proteins SecDF-YajC and YidC. Requires Zn(2+) as cofactor.

The protein resides in the cell inner membrane. Its subcellular location is the cytoplasm. It carries out the reaction ATP + H2O + cellular proteinSide 1 = ADP + phosphate + cellular proteinSide 2.. Its function is as follows. Part of the Sec protein translocase complex. Interacts with the SecYEG preprotein conducting channel. Has a central role in coupling the hydrolysis of ATP to the transfer of proteins into and across the cell membrane, serving both as a receptor for the preprotein-SecB complex and as an ATP-driven molecular motor driving the stepwise translocation of polypeptide chains across the membrane. The polypeptide is Protein translocase subunit SecA (Stenotrophomonas maltophilia (strain K279a)).